Here is a 254-residue protein sequence, read N- to C-terminus: Zinc import ATP-binding protein ZnuC (254 aa).

The ABC transporter domain maps to 5-221; it reads ICAADLSVSH…PAYRALFGSE (217 aa). 38-45 serves as a coordination point for ATP; it reads GPNGSGKS. The segment covering 234–245 has biased composition (basic and acidic residues); the sequence is DHDHDHVAEGHR. The disordered stretch occupies residues 234–254; it reads DHDHDHVAEGHRHGPACAHPH.

The protein belongs to the ABC transporter superfamily. Zinc importer (TC 3.A.1.15.5) family. As to quaternary structure, the complex is composed of two ATP-binding proteins (ZnuC), two transmembrane proteins (ZnuB) and a solute-binding protein (ZnuA).

Its subcellular location is the cell inner membrane. It carries out the reaction Zn(2+)(out) + ATP(in) + H2O(in) = Zn(2+)(in) + ADP(in) + phosphate(in) + H(+)(in). Functionally, part of the ABC transporter complex ZnuABC involved in zinc import. Responsible for energy coupling to the transport system. This is Zinc import ATP-binding protein ZnuC from Paracoccus denitrificans (strain Pd 1222).